Consider the following 165-residue polypeptide: Growth arrest and DNA damage-inducible protein GADD45 alpha (165 aa).

A Phosphothreonine modification is found at Thr2.

Belongs to the GADD45 family. In terms of assembly, interacts with AURKA, PCNA, GADD45GIP1 and MAPK14.

The protein resides in the nucleus. Might affect PCNA interaction with some CDK (cell division protein kinase) complexes; stimulates DNA excision repair in vitro and inhibits entry of cells into S phase. In T-cells, functions as a regulator of p38 MAPKs by inhibiting p88 phosphorylation and activity. The polypeptide is Growth arrest and DNA damage-inducible protein GADD45 alpha (GADD45A) (Felis catus (Cat)).